The chain runs to 671 residues: DNA ligase (671 aa).

Residues aspartate 34–aspartate 38, serine 83–leucine 84, and glutamate 113 contribute to the NAD(+) site. The active-site N6-AMP-lysine intermediate is lysine 115. Residues arginine 136, glutamate 170, lysine 286, and lysine 310 each contribute to the NAD(+) site. The Zn(2+) site is built by cysteine 404, cysteine 407, cysteine 422, and cysteine 427. The region spanning glutamate 590–glutamine 671 is the BRCT domain.

This sequence belongs to the NAD-dependent DNA ligase family. LigA subfamily. Requires Mg(2+) as cofactor. Mn(2+) is required as a cofactor.

It carries out the reaction NAD(+) + (deoxyribonucleotide)n-3'-hydroxyl + 5'-phospho-(deoxyribonucleotide)m = (deoxyribonucleotide)n+m + AMP + beta-nicotinamide D-nucleotide.. In terms of biological role, DNA ligase that catalyzes the formation of phosphodiester linkages between 5'-phosphoryl and 3'-hydroxyl groups in double-stranded DNA using NAD as a coenzyme and as the energy source for the reaction. It is essential for DNA replication and repair of damaged DNA. The protein is DNA ligase of Shouchella clausii (strain KSM-K16) (Alkalihalobacillus clausii).